Consider the following 322-residue polypeptide: Aspartate carbamoyltransferase catalytic subunit (322 aa).

Positions 65 and 66 each coordinate carbamoyl phosphate. K93 lines the L-aspartate pocket. R115, H143, and Q146 together coordinate carbamoyl phosphate. The L-aspartate site is built by R176 and R230. G271 and P272 together coordinate carbamoyl phosphate.

It belongs to the aspartate/ornithine carbamoyltransferase superfamily. ATCase family. In terms of assembly, heterododecamer (2C3:3R2) of six catalytic PyrB chains organized as two trimers (C3), and six regulatory PyrI chains organized as three dimers (R2).

The enzyme catalyses carbamoyl phosphate + L-aspartate = N-carbamoyl-L-aspartate + phosphate + H(+). Its pathway is pyrimidine metabolism; UMP biosynthesis via de novo pathway; (S)-dihydroorotate from bicarbonate: step 2/3. Catalyzes the condensation of carbamoyl phosphate and aspartate to form carbamoyl aspartate and inorganic phosphate, the committed step in the de novo pyrimidine nucleotide biosynthesis pathway. The protein is Aspartate carbamoyltransferase catalytic subunit of Brucella abortus (strain S19).